The sequence spans 417 residues: MSSKYPRSVRRCLPLCALTLEAALILLFYFFTQYDASLEDQKGLVASYQVGQDLTVMAAIGFGFLTSSFRRHSWSSVAFSLFMLALGVQWAILLDGFLSQFPPGKVVITLFSIRLATTSALSVLISVDAVLGKVNLVQLVVMVLVEVTALGTVRMVISNIFNTDYHMNLMHIYVFAAYFGLSVAWCLPKPLPKGTEDKDQIATIPSLSAMLGALFLWMFWPSFNSALLRSPIERKNAVFNTYYAVAVSVVTAISGSSLAHPQGKISMSYMHNAVLAGGVAVGTSCHLITSPWLAMVLGLVAGLISIGGAKYLPGCCNRVLGIYHSSVMHYNFSLLGLLGEIIYIVLLVHHTVWNGNGMIGFQVLLRIGEFSLATTIALTSGLLTGLLLNLKIWKAPHAAKYFDDQVFWKFPHLAVEF.

Helical transmembrane passes span 12-32 (CLPL…YFFT), 44-64 (LVAS…GFGF), 77-97 (VAFS…LDGF), 125-145 (ISVD…MVLV), 172-192 (IYVF…KPLP), 203-223 (TIPS…WPSF), 238-258 (VFNT…GSSL), 265-285 (ISMS…GTSC), 287-307 (LITS…ISIG), 331-351 (NFSL…VHHT), and 358-378 (MIGF…TIAL).

It belongs to the ammonium transporter (TC 2.A.49) family. Rh subfamily.

Its subcellular location is the membrane. Its function is as follows. May be part of an oligomeric complex which is likely to have a transport or channel function in the erythrocyte membrane. In Pan troglodytes (Chimpanzee), this protein is RH-like protein IA.